A 475-amino-acid polypeptide reads, in one-letter code: MNLETIIGLEVHVELKTNSKIFSASPTEFGAEPNTQTSVIDLGYPGVLPTLNKEAVNFAMKAAMALNCEIATETKFDRKNYFYPDNPKAYQISQFDKPIGENGWIEIEVDGKKKRIGITRLHLEEDAGKSTHAADGSLVDYNRQGMPLIEIVSEPDMRTPEEAYAYLEKLKSIIQYTGVSDCKMEEGSLRCDANISLRPVGQEKFGTKAELKNLNSFTYVQKGLEHEQVRQEKELLSGGIIQQETRRYDEATKKTILMRIKEGSDDYRYFPEPDLVELYIDDEWKEEIRASIPELPDARKARYVEEVGLPAYDAHVLTLTKEMSDFFEATVADGADAKLTSNWLMGEVLAYLNKQQKELKDVALTPAGLAKMVQLIEKGTISSKIAKKVFNELIEKGGDPEEIVKAKGLVQISDEGTLRKVVTEILDNNEQSIEDFKNGKDRAIGFLVGQIMKATKGQANPPLVNKILLEEINKR.

It belongs to the GatB/GatE family. GatB subfamily. Heterotrimer of A, B and C subunits.

The enzyme catalyses L-glutamyl-tRNA(Gln) + L-glutamine + ATP + H2O = L-glutaminyl-tRNA(Gln) + L-glutamate + ADP + phosphate + H(+). The catalysed reaction is L-aspartyl-tRNA(Asn) + L-glutamine + ATP + H2O = L-asparaginyl-tRNA(Asn) + L-glutamate + ADP + phosphate + 2 H(+). Allows the formation of correctly charged Asn-tRNA(Asn) or Gln-tRNA(Gln) through the transamidation of misacylated Asp-tRNA(Asn) or Glu-tRNA(Gln) in organisms which lack either or both of asparaginyl-tRNA or glutaminyl-tRNA synthetases. The reaction takes place in the presence of glutamine and ATP through an activated phospho-Asp-tRNA(Asn) or phospho-Glu-tRNA(Gln). The protein is Aspartyl/glutamyl-tRNA(Asn/Gln) amidotransferase subunit B of Bacillus mycoides (strain KBAB4) (Bacillus weihenstephanensis).